Here is a 317-residue protein sequence, read N- to C-terminus: USG-1 protein homolog (317 aa).

Belongs to the aspartate-semialdehyde dehydrogenase family.

This is USG-1 protein homolog (usg) from Haemophilus influenzae (strain ATCC 51907 / DSM 11121 / KW20 / Rd).